We begin with the raw amino-acid sequence, 655 residues long: MIDLVFPDGSSRQYPDGATGRDVAAAISKSLEKKALLIKLDGQVLDLDRRLTPDLLTGERKFEILTREAPEALDTIRHDTAHVLAEAVQELFPGTQVTIGPNVEDGFYYDFARDEPFSLDDLEKIEKRMKEIVDRDEKITREVWDRNEAIAHFDGIGEQYKAQIIRDLPDTDTITVYRQGNWKDLCRGPHLPSTKHVGKAFKLTKLAGAYWRGDQNNAQLQRIYGTAWASEADLEAHLKRIEEAEKRDHRKLGKTMDLFHIQEEGKGMVFWHPKGWALYRVLEDYMRRRLDAAGYKEVKTPQILDRSLWEKSGHAEKFGHAMFMCESAEGEVLAVKPMNCPGHIQIFNVGQKSYRELPLRMAEFGACHRYEPSGAMHGIMRVRAFTQDDAHIFCREEQVTEESARFIELLRSVYNDLGMTLADTKFSTRPELRAGTDETWDKAEAALAAAAEAAGETLTLQPGEGAFYGPKLEFSLKDAIGRVWQCGTLQLDFVLPERLDAEYVSEDGSKKRPVMLHRAILGSFERFIGILLENFAGALPVWLAPTQVVVATITSDADDYAREVVEKLTKLGMRAELDLRNEKINYKIREHSLAKVPVIAVVGRKEAETGQLALRRLGGEGQSVLSLEEALRVLKSDATPPDVARALAVQEAVTA.

In terms of domain architecture, TGS spans 1 to 66; it reads MIDLVFPDGS…TGERKFEILT (66 aa). Residues 248–540 form a catalytic region; it reads DHRKLGKTMD…LLENFAGALP (293 aa). Zn(2+) is bound by residues Cys340, His391, and His517.

This sequence belongs to the class-II aminoacyl-tRNA synthetase family. Homodimer. The cofactor is Zn(2+).

It localises to the cytoplasm. It catalyses the reaction tRNA(Thr) + L-threonine + ATP = L-threonyl-tRNA(Thr) + AMP + diphosphate + H(+). Functionally, catalyzes the attachment of threonine to tRNA(Thr) in a two-step reaction: L-threonine is first activated by ATP to form Thr-AMP and then transferred to the acceptor end of tRNA(Thr). Also edits incorrectly charged L-seryl-tRNA(Thr). In Caulobacter vibrioides (strain ATCC 19089 / CIP 103742 / CB 15) (Caulobacter crescentus), this protein is Threonine--tRNA ligase.